The chain runs to 215 residues: ATP-dependent Clp protease proteolytic subunit 3 (215 aa).

Ser119 serves as the catalytic Nucleophile. Residue His144 is part of the active site.

Belongs to the peptidase S14 family. As to quaternary structure, fourteen ClpP subunits assemble into 2 heptameric rings which stack back to back to give a disk-like structure with a central cavity, resembling the structure of eukaryotic proteasomes.

The protein resides in the cytoplasm. It carries out the reaction Hydrolysis of proteins to small peptides in the presence of ATP and magnesium. alpha-casein is the usual test substrate. In the absence of ATP, only oligopeptides shorter than five residues are hydrolyzed (such as succinyl-Leu-Tyr-|-NHMec, and Leu-Tyr-Leu-|-Tyr-Trp, in which cleavage of the -Tyr-|-Leu- and -Tyr-|-Trp bonds also occurs).. Functionally, cleaves peptides in various proteins in a process that requires ATP hydrolysis. Has a chymotrypsin-like activity. Plays a major role in the degradation of misfolded proteins. The protein is ATP-dependent Clp protease proteolytic subunit 3 of Prochlorococcus marinus subsp. pastoris (strain CCMP1986 / NIES-2087 / MED4).